The chain runs to 430 residues: MALLHSSRILSGMAAAFHPGLAAAASARASSWWTHVEMGPPDPILGVTEAFKRDTNSKKMNLGVGAYRDDNGKPYVLPSVRKAEAQIAAKNLDKEYLPIGGLAEFCKASAELALGENNEVLKSGRFVTVQTISGTGALRVGASFLQRFFKFSRDVFLPKPSWGNHTPIFRDAGMQLQGYRYYDPKTCGFDFSGALEDISKIPEQSVLLLHACAHNPTGVDPRPEQWKEIASVVKKKNLFAFFDMAYQGFASGDGDKDAWAVRHFIEQGINVCLCQSYAKNMGLYGERVGAFTVVCKDAEEAKRVESQLKILIRPLYSNPPLNGARIAATILTSPDLRKQWLQEVKGMADRIISMRTQLVSNLKKEGSSHNWQHITDQIGMFCFTGLKPEQVERLTKEFSVYMTKDGRISVAGVTSGNVGYLAHAIHQVTK.

A mitochondrion-targeting transit peptide spans 1–29 (MALLHSSRILSGMAAAFHPGLAAAASARA). Thr-48 bears the Phosphothreonine mark. Lys-59 bears the N6-acetyllysine mark. A substrate-binding site is contributed by Gly-65. The residue at position 73 (Lys-73) is an N6-acetyllysine; alternate. An N6-succinyllysine; alternate modification is found at Lys-73. Lys-82 carries the N6-acetyllysine modification. Lys-90 carries the post-translational modification N6-acetyllysine; alternate. Lys-90 is modified (N6-succinyllysine; alternate). Tyr-96 carries the 3'-nitrotyrosine; alternate modification. Tyr-96 is subject to Phosphotyrosine; alternate. Lys-107 and Lys-122 each carry N6-acetyllysine; alternate. Residues Lys-107 and Lys-122 each carry the N6-succinyllysine; alternate modification. Residue Ser-143 is modified to Phosphoserine. Lys-159 bears the N6-acetyllysine; alternate mark. At Lys-159 the chain carries N6-succinyllysine; alternate. Trp-162 serves as a coordination point for substrate. Lys-185 is subject to N6-acetyllysine; alternate. Lys-185 carries the post-translational modification N6-succinyllysine; alternate. Asn-215 contributes to the substrate binding site. Lys-227 is subject to N6-succinyllysine. Lys-234 carries the N6-acetyllysine modification. N6-acetyllysine; alternate is present on residues Lys-279 and Lys-296. Lys-279 is subject to N6-(pyridoxal phosphate)lysine; alternate. At Lys-296 the chain carries N6-succinyllysine; alternate. At Lys-302 the chain carries N6-acetyllysine. Residue Lys-309 is modified to N6-acetyllysine; alternate. Lys-309 carries the N6-succinyllysine; alternate modification. Arg-313 carries the post-translational modification Asymmetric dimethylarginine. Position 338 is an N6-acetyllysine; alternate (Lys-338). The residue at position 338 (Lys-338) is an N6-succinyllysine; alternate. N6-acetyllysine is present on Lys-345. Position 363 is an N6-acetyllysine; alternate (Lys-363). The residue at position 363 (Lys-363) is an N6-succinyllysine; alternate. Residues Lys-364 and Lys-387 each carry the N6-acetyllysine modification. N6-acetyllysine; alternate occurs at positions 396 and 404. 2 positions are modified to N6-succinyllysine; alternate: Lys-396 and Lys-404. A substrate-binding site is contributed by Arg-407.

This sequence belongs to the class-I pyridoxal-phosphate-dependent aminotransferase family. Homodimer. The cofactor is pyridoxal 5'-phosphate. In terms of processing, acetylation of Lys-296, Lys-345 and Lys-363 is observed in liver mitochondria from fasted mice but not from fed mice. Detected in brain (at protein level).

It localises to the mitochondrion matrix. It is found in the cell membrane. The enzyme catalyses L-aspartate + 2-oxoglutarate = oxaloacetate + L-glutamate. It catalyses the reaction L-kynurenine + 2-oxoglutarate = kynurenate + L-glutamate + H2O. Its function is as follows. Catalyzes the irreversible transamination of the L-tryptophan metabolite L-kynurenine to form kynurenic acid (KA). As a member of the malate-aspartate shuttle, it has a key role in the intracellular NAD(H) redox balance. Is important for metabolite exchange between mitochondria and cytosol, and for amino acid metabolism. Facilitates cellular uptake of long-chain free fatty acids. The chain is Aspartate aminotransferase, mitochondrial (Got2) from Mus musculus (Mouse).